The following is a 151-amino-acid chain: HTH-type transcriptional regulator FL11 (151 aa).

The 62-residue stretch at 5 to 66 (LDEIDKKIIK…IIDPEALGYS (62 aa)) folds into the HTH asnC-type domain. Positions 24–43 (LREISKITGLAESTIHERIR) form a DNA-binding region, H-T-H motif. An L-arginine-binding site is contributed by 98–104 (ETTGDYD). L-lysine-binding positions include asparagine 118, aspartate 122, and 133–135 (THT). L-arginine contacts are provided by residues aspartate 122 and 133 to 135 (THT).

As to quaternary structure, homodimer. Binds DNA as a dimer and an octamer. The octamer formed with lysine is stable in solution, but the octamer formed with arginine is unstable without DNA. When crystallized in the absence of DNA, dimers are assembled into helical cylinders with six dimers per turn. In solution, predominantly behaves as a dimer.

With respect to regulation, in the famine mode, FL11 forms dimers and acts as a repressor, leading to growth arrest. In the feast mode, in the presence of high concentrations of lysine or arginine, four dimers assemble into an octamer and cover the fl11 and lysine biosynthesis promoters. This leads to the inhibition of fl11 expression and lysine biosynthesis, decrease of the FL11 concentration in the cell, derepression of the target genes and activation of the metabolism. DNA-binding protein involved in the repression of transcription of a large number of genes, thereby arresting growth, in response to environmental changes. Binding sites are identified in promoters of approximately 200 transcription units, including genes involved in ATP synthesis, transmembrane transport, translation and DNA synthesis. The protein is HTH-type transcriptional regulator FL11 of Pyrococcus horikoshii (strain ATCC 700860 / DSM 12428 / JCM 9974 / NBRC 100139 / OT-3).